The primary structure comprises 178 residues: MSNKESNVALQTLRVTKDMKDFLSHRIVGEPPANIKIEYQKIHRYRTCVCPSTGHISELCPSGDLILSLGAHRNVIAAATVYDVVKNKTKSTTSKAGTSSTLSSLGLSGFQKPKIGSKNKKTMFSKQNNSTNESDESEGEEGSSLNDLPKSDLINAIMELASQGRNNSKGKGRRGGKR.

Residues 108–178 form a disordered region; sequence SGFQKPKIGS…KGKGRRGGKR (71 aa). Residues 168-178 show a composition bias toward basic residues; the sequence is SKGKGRRGGKR.

The protein belongs to the phytoreovirus RNA-binding protein family.

The protein localises to the host cytoplasm. Constituent of viral factories. Binds to ssRNA and dsRNA. This chain is RNA-binding protein, found in Wound tumor virus (strain NJ) (WTV).